The chain runs to 121 residues: MIQPQSYLNVADNSGARKLMCIRVLGGGRQTATIGDVIIAVVKDALPNMPLKKSDVVRAVIVRTSKGVRRENGMMLCFDDNAAVVINKEGNPRGTRVFGPIARELRDRNFTKIVSLAPEVV.

Belongs to the universal ribosomal protein uL14 family. Part of the 50S ribosomal subunit.

It localises to the plastid. Its subcellular location is the chloroplast. Binds to 23S rRNA. The chain is Large ribosomal subunit protein uL14c from Tetradesmus obliquus (Green alga).